A 349-amino-acid chain; its full sequence is UDP-N-acetylenolpyruvoylglucosamine reductase (349 aa).

The FAD-binding PCMH-type domain occupies 25–197 (GIDARARYAA…VSVTFRLPKR (173 aa)). Arg-173 is a catalytic residue. Ser-249 functions as the Proton donor in the catalytic mechanism. Glu-345 is an active-site residue.

It belongs to the MurB family. It depends on FAD as a cofactor.

Its subcellular location is the cytoplasm. It carries out the reaction UDP-N-acetyl-alpha-D-muramate + NADP(+) = UDP-N-acetyl-3-O-(1-carboxyvinyl)-alpha-D-glucosamine + NADPH + H(+). It participates in cell wall biogenesis; peptidoglycan biosynthesis. Its function is as follows. Cell wall formation. The protein is UDP-N-acetylenolpyruvoylglucosamine reductase of Burkholderia multivorans (strain ATCC 17616 / 249).